The following is an 81-amino-acid chain: Large ribosomal subunit protein uL29c (81 aa).

Belongs to the universal ribosomal protein uL29 family.

Its subcellular location is the plastid. The protein localises to the chloroplast. The sequence is that of Large ribosomal subunit protein uL29c from Phaeodactylum tricornutum (strain CCAP 1055/1).